Consider the following 209-residue polypeptide: MICOS complex subunit mic19 (209 aa).

Coiled coils occupy residues 48 to 86 and 127 to 156; these read LELE…DTGS and EVAA…GRKK.

It belongs to the MICOS complex subunit Mic19 family. As to quaternary structure, component of the mitochondrial contact site and cristae organizing system (MICOS) complex.

Its subcellular location is the mitochondrion inner membrane. Its function is as follows. Component of the MICOS complex, a large protein complex of the mitochondrial inner membrane that plays crucial roles in the maintenance of crista junctions, inner membrane architecture, and formation of contact sites to the outer membrane. Involved in osmoadaptation. The protein is MICOS complex subunit mic19 of Emericella nidulans (strain FGSC A4 / ATCC 38163 / CBS 112.46 / NRRL 194 / M139) (Aspergillus nidulans).